A 247-amino-acid polypeptide reads, in one-letter code: Homeobox-leucine zipper protein HOX17 (247 aa).

The disordered stretch occupies residues 58 to 81 (ERAGLRGGGGSDEEDGGCGIDGSR). The segment at residues 79–138 (GSRKKLRLSKDQSAVLEDSFREHPTLNPRQKATLAQQLGLRPRQVEVWFQNRRARTKLKQ) is a DNA-binding region (homeobox). The interval 137–182 (KQTEVDCEFLKRCCETLTEENRRLQKEVQELRALKLVSPHLYMNMS) is leucine-zipper.

Belongs to the HD-ZIP homeobox family. Class II subfamily. Expressed in seedlings, roots, stems, leaf sheaths and blades and panicles.

Its subcellular location is the nucleus. In terms of biological role, probable transcription factor. The sequence is that of Homeobox-leucine zipper protein HOX17 (HOX17) from Oryza sativa subsp. japonica (Rice).